Reading from the N-terminus, the 281-residue chain is Ethylene-inducing xylanase 1 (281 aa).

The N-terminal stretch at 1 to 19 (MVSYKAFLITLAAVTRVLT) is a signal peptide. A glycan (N-linked (GlcNAc...) asparagine) is linked at Asn-23. Residues 32–220 (SGTPSSTGTS…SSGSSDITVG (189 aa)) enclose the GH11 domain. The Nucleophile role is filled by Glu-116. Glu-207 (proton donor) is an active-site residue. Residues 246–281 (TCGALYSQCGGTGFTGSQCCASGTCKYANSYYSQCL) form the CBM1 domain.

It belongs to the glycosyl hydrolase 11 (cellulase G) family.

It catalyses the reaction Endohydrolysis of (1-&gt;4)-beta-D-xylosidic linkages in xylans.. It functions in the pathway glycan degradation; xylan degradation. Its function is as follows. Endo-1,4-beta-xylanase involved in the hydrolysis of xylan, a major structural heterogeneous polysaccharide found in plant biomass representing the second most abundant polysaccharide in the biosphere, after cellulose. May act as an elicitor of plant defense responses in certain plants but does not exhibit any cell death when transiently expressed in N.benthamiana. The sequence is that of Ethylene-inducing xylanase 1 from Botryotinia fuckeliana (strain B05.10) (Noble rot fungus).